We begin with the raw amino-acid sequence, 218 residues long: Cytochrome b6 (218 aa).

Residues 35–55 form a helical membrane-spanning segment; the sequence is IFYCLGGITLVCFLIQFATGF. Cys-38 lines the heme c pocket. 2 residues coordinate heme b: His-89 and His-103. The next 3 membrane-spanning stretches (helical) occupy residues 93–113, 119–139, and 189–209; these read ASMMVLMLILHVFRVYLTGGF, LTWVTGVVMAVITVAFGVTGY, and LHTFVLPWSLAVFMLMHFLMI. Residues His-190 and His-205 each contribute to the heme b site.

It belongs to the cytochrome b family. PetB subfamily. In terms of assembly, the 4 large subunits of the cytochrome b6-f complex are cytochrome b6, subunit IV (17 kDa polypeptide, PetD), cytochrome f and the Rieske protein, while the 4 small subunits are PetG, PetL, PetM and PetN. The complex functions as a dimer. Heme b is required as a cofactor. It depends on heme c as a cofactor.

Its subcellular location is the cellular thylakoid membrane. In terms of biological role, component of the cytochrome b6-f complex, which mediates electron transfer between photosystem II (PSII) and photosystem I (PSI), cyclic electron flow around PSI, and state transitions. The polypeptide is Cytochrome b6 (Prochlorococcus marinus subsp. pastoris (strain CCMP1986 / NIES-2087 / MED4)).